Reading from the N-terminus, the 129-residue chain is Small ribosomal subunit protein uS9 (129 aa).

The protein belongs to the universal ribosomal protein uS9 family.

This Chlorobium phaeovibrioides (strain DSM 265 / 1930) (Prosthecochloris vibrioformis (strain DSM 265)) protein is Small ribosomal subunit protein uS9.